The sequence spans 336 residues: Glyoxylate reductase (336 aa).

Residues 158–161 (FGRI), 180–182 (SRT), and 239–241 (IAR) each bind NADP(+). Residues R241 and E270 contribute to the active site. The active-site Proton donor is H288. 288–290 (HIG) lines the NADP(+) pocket.

This sequence belongs to the D-isomer specific 2-hydroxyacid dehydrogenase family. GyaR subfamily. In terms of assembly, homodimer.

Its subcellular location is the cytoplasm. It carries out the reaction glycolate + NAD(+) = glyoxylate + NADH + H(+). In Pyrococcus furiosus (strain ATCC 43587 / DSM 3638 / JCM 8422 / Vc1), this protein is Glyoxylate reductase.